Consider the following 583-residue polypeptide: Kelch-like protein 35 (583 aa).

A BTB domain is found at 41–119; sequence TDVVLRAGGR…VYGAGVRLRA (79 aa). The region spanning 146 to 248 is the BACK domain; that stretch reads LEGRLRAANS…LEHVRLPLLA (103 aa). Kelch repeat units follow at residues 301 to 350, 352 to 394, 395 to 441, 443 to 489, 490 to 531, and 533 to 579; these read VIVV…ALRN, VYVS…VVQG, QLFA…SCAG, LFVI…SLED, TIYV…VCDG, and VHIL…TIIQ.

This Homo sapiens (Human) protein is Kelch-like protein 35 (KLHL35).